An 841-amino-acid polypeptide reads, in one-letter code: MPNQMRVLDFGDGSVPIQLDYPDSKIFSKCSSYGDRVPGTHWNEITVHHKGRLEYSPNPEQIILDALYQAIDGADFFPVFYQRGKNMDTMLVRNCKAAIDKLFKQRLSINLKGGASIPISIQLGVAQYQRHQITPTFHIARVVTRLMKQLIQRDGVDGLLNLDNFGSHPEFKNLVVSLGNPSILMNVCQVIHNDDNERFRLNGFILSNNRIRDIRPLTLLANVDYALLDLRGNKIKSAERLCRALEQFRARELLLENNPIVKISNFPANIKSLESNFELVDGKPFNMLHKIFSPLDVEIDLEVDGARIDTNNMWKLPEFENSQHWHAFMIPDPSHEFNQEVFFDFFFIRLDPTLSNFYPCYYKYINTEHVFLVRNCFDQIAHLVNNCNLEMTIPTGDRIFRYYLRMNVSTVKQHHVDPEECIQKAVSQCYVAQNRMLNLERFHSRECLKDVMVSLSSPKILTYVLSVASRKFMTTCSEIRLCHNKVLVLDGAHVLGMMGCLRAVDLSHNWVQDLSSIHSLGNLPLKSLVLHGNKLCRNYRLPSEYVRAVKEVFPQLTTLDGVDLQTNPGQSLQKNFLCDTGAYELVGAFLENYLREFENDEFRHNLYKYYSENSIFTLTCNYNVVQNHQTPKILQRLSKYNRHARNLRNKDYSKASDGVFFGCTYIVEILLQLPRVTHDFHSLQTDVMHYNGKGAVIYVAGLLRDEPPSTRNGHGSKTDIGGVLLGFSRQFVVTFDEANLGLGKRARRLKIANERLHITNPSKTAIRNAFSVNFPDPSERQAEEDSLDVKDHKLLLFQEVTGLISTWVTSIVEEADWDFERALKLFIQKNADHEIPDLAFA.

Residues 1–285 (MPNQMRVLDF…NFELVDGKPF (285 aa)) form an RNA-binding unit probably involved in Piwi-dependent recruitment and single-stranded RNA-PPNP complex formation region. LRR repeat units lie at residues 200–221 (RLNGFILSNNRIRDIRPLTLLA), 224–245 (DYALLDLRGNKIKSAERLCRAL), and 249–270 (RARELLLENNPIVKISNFPANI). The segment at 286 to 553 (NMLHKIFSPL…EYVRAVKEVF (268 aa)) is necessary for silencing function. Positions 325-408 (WHAFMIPDPS…IFRYYLRMNV (84 aa)) constitute an RRM domain. 3 LRR repeats span residues 475 to 496 (TCSEIRLCHNKVLVLDGAHVLG), 500 to 521 (CLRAVDLSHNWVQDLSSIHSLG), and 524 to 545 (PLKSLVLHGNKLCRNYRLPSEY). One can recognise an NTF2 domain in the interval 585 to 758 (LVGAFLENYL…LKIANERLHI (174 aa)). The 54-residue stretch at 788 to 841 (DVKDHKLLLFQEVTGLISTWVTSIVEEADWDFERALKLFIQKNADHEIPDLAFA) folds into the TAP-C domain.

This sequence belongs to the NXF family. In the ovaries, part of a complex composed of at least Panx, nxf2, piwi and Nxt1. The complex is knowns as Panx-induced cotranscriptional silencing (PICTS) complex, Panx-nxf2-dependent TAP/p15 silencing (Pandas complex), SFiNX (silencing factor interacting nuclear export variant) or piwi-Panx-nxf2-p15 (PPNP) complex. Interacts (via TAP-C domain) with Panx (via NIR region); the interaction is direct. Interacts (via NTF2 domain) with Nxt1; the interaction is direct and prevents Nxt1 binding to nucleoporins. Interacts with sbr/Nxf1. As to expression, expressed in female gonads (at protein level). Expressed ubiquitously.

The protein resides in the cytoplasm. Its subcellular location is the nucleus. The protein localises to the nucleoplasm. Functionally, may be involved in the export of mRNA from the nucleus to the cytoplasm. In the ovaries, forms a complex with nxf2, piwi and Nxt1 which acts as effectors of cotranscriptional transposon silencing. On recruitment to a target transcript, interacts with single stranded RNA, thereby anchoring the complex via the nascent target transcript to chromatin and allowing Panx to recruit silencing effectors to establishing repressive heterochromatin at transposon loci. Does not affect piRNA biogenesis. The interaction with Panx stabilizes the nuclear protein complex. Does not bind nucleoporins, but regulates sbr/Nxf1 binding to nucleoporins and, indirectly, transposon exports. This chain is Nuclear RNA export factor 2 (nxf2), found in Drosophila melanogaster (Fruit fly).